The primary structure comprises 313 residues: Ankyrin repeat family A protein 2 (313 aa).

5 ANK repeats span residues 148-180 (ANSLSVHQLAAQGEMLYLATRIEQENVINHTDE), 181-213 (EGFTPLMWAAAHGQIAVVEFLLQNGADPQLLGK), 214-246 (GRESALSLACSKGYTDIVKMLLDCGVDVNEYDW), 247-279 (NGGTPLLYAVHGNHVKCVKMLLESGADPTIETD), and 280-313 (SGYNSMDLAVALGYRSVQQVIESHLLKLLQNIKE).

Interacts (via ANK repeats) with CCDC8 (via PxLPxI/L motif); mediates the interaction with the 3M complex which is composed of CCDC8, CUL7 and OBSL1. Interacts (via ANK repeats) with HDAC4 (via PxLPxI/L motif). Interacts (via ANK repeats) with HDAC5 (via PxLPxI/L motif). Interacts (via ANK repeats) with LRP2/megalin (via PxLPxI/L motif). Interacts (via ANK repeats) with RFX7 (via PxLPxI/L motif). Interacts with AHRR. Interacts with NEK6.

The protein resides in the cytoplasm. It localises to the cytoskeleton. The protein localises to the membrane. May regulate the interaction between the 3M complex and the histone deacetylases HDAC4 and HDAC5. May also regulate LRP2/megalin. The protein is Ankyrin repeat family A protein 2 (ANKRA2) of Homo sapiens (Human).